Reading from the N-terminus, the 308-residue chain is tRNA pseudouridine synthase B (308 aa).

The Nucleophile role is filled by D49.

This sequence belongs to the pseudouridine synthase TruB family. Type 1 subfamily.

The catalysed reaction is uridine(55) in tRNA = pseudouridine(55) in tRNA. Its function is as follows. Responsible for synthesis of pseudouridine from uracil-55 in the psi GC loop of transfer RNAs. This is tRNA pseudouridine synthase B from Nitrosococcus oceani (strain ATCC 19707 / BCRC 17464 / JCM 30415 / NCIMB 11848 / C-107).